Consider the following 177-residue polypeptide: Biotin-dependent acetyl-/propionyl-coenzyme A carboxylase epsilon subunit (177 aa).

The disordered stretch occupies residues Met1–Pro112. Residues Val18–Ala100 are compositionally biased toward polar residues.

Interacts with the AccA3/AccD5 biotin-dependent acyl-CoA carboxylase complex. Interacts with the AccA3/AccD6 complex. Is also part of the long-chain acyl-CoA carboxylase (LCC) complex, which is composed of AccA3, AccD4, AccD5 and AccE5. The four subunits are essential for activity, but AccD5, together with AccE5, probably plays a structural role rather than a catalytic one.

In terms of biological role, stimulates activity of the AccA3/AccD5 biotin-dependent acyl-CoA carboxylase complex. Interacts with AccD5 and modulates its carboxylase activity for acetyl-CoA and propionyl-CoA. Inhibits activity of the AccA3/AccD6 complex. Is also required for the activity of the long-chain acyl-CoA carboxylase (LCC) complex. The polypeptide is Biotin-dependent acetyl-/propionyl-coenzyme A carboxylase epsilon subunit (Mycobacterium tuberculosis (strain ATCC 25618 / H37Rv)).